The primary structure comprises 255 residues: Taurine import ATP-binding protein TauB (255 aa).

The ABC transporter domain maps to 2 to 229 (LQISHLYADY…RFVAGESSRS (228 aa)). 34 to 41 (GPSGCGKT) contacts ATP.

Belongs to the ABC transporter superfamily. Taurine importer (TC 3.A.1.17.1) family. The complex is composed of two ATP-binding proteins (TauB), two transmembrane proteins (TauC) and a solute-binding protein (TauA).

The protein localises to the cell inner membrane. It carries out the reaction taurine(out) + ATP + H2O = taurine(in) + ADP + phosphate + H(+). Functionally, part of the ABC transporter complex TauABC involved in taurine import. Responsible for energy coupling to the transport system. The protein is Taurine import ATP-binding protein TauB of Escherichia coli O157:H7.